Here is a 162-residue protein sequence, read N- to C-terminus: Lymphocyte antigen 86 (162 aa).

An N-terminal signal peptide occupies residues 1 to 19 (MNGVAAALLVWILTSPSSS). 3 disulfide bridges follow: cysteine 33–cysteine 58, cysteine 45–cysteine 154, and cysteine 102–cysteine 112. Asparagine 96 is a glycosylation site (N-linked (GlcNAc...) asparagine). Asparagine 156 is a glycosylation site (N-linked (GlcNAc...) asparagine).

In terms of assembly, M-shaped tetramer of two CD180-LY86 heterodimers. As to expression, highly expressed in spleen, liver, brain and thymus, and at lower levels in kidney.

The protein localises to the secreted. The protein resides in the extracellular space. May cooperate with CD180 and TLR4 to mediate the innate immune response to bacterial lipopolysaccharide (LPS) and cytokine production. Important for efficient CD180 cell surface expression. The chain is Lymphocyte antigen 86 (Ly86) from Mus musculus (Mouse).